The following is a 116-amino-acid chain: Ribosome-binding factor A (116 aa).

This sequence belongs to the RbfA family. In terms of assembly, monomer. Binds 30S ribosomal subunits, but not 50S ribosomal subunits or 70S ribosomes.

The protein localises to the cytoplasm. Its function is as follows. One of several proteins that assist in the late maturation steps of the functional core of the 30S ribosomal subunit. Associates with free 30S ribosomal subunits (but not with 30S subunits that are part of 70S ribosomes or polysomes). Required for efficient processing of 16S rRNA. May interact with the 5'-terminal helix region of 16S rRNA. This is Ribosome-binding factor A from Streptococcus pneumoniae (strain ATCC 700669 / Spain 23F-1).